Consider the following 369-residue polypeptide: Chaperone protein DnaJ (369 aa).

A J domain is found at 4–69 (SYYEILEVEK…KKRALYDRYG (66 aa)). The CR-type zinc-finger motif lies at 130 to 207 (GCKKTIKAQY…CKGKTYILKD (78 aa)). Zn(2+) is bound by residues cysteine 143, cysteine 146, cysteine 159, cysteine 162, cysteine 181, cysteine 184, cysteine 195, and cysteine 198. CXXCXGXG motif repeat units lie at residues 143–150 (CESCDGTG), 159–166 (CKQCNGQG), 181–188 (CGACQGKG), and 195–202 (CQACKGKT).

Belongs to the DnaJ family. Homodimer. Zn(2+) is required as a cofactor.

The protein resides in the cytoplasm. Functionally, participates actively in the response to hyperosmotic and heat shock by preventing the aggregation of stress-denatured proteins and by disaggregating proteins, also in an autonomous, DnaK-independent fashion. Unfolded proteins bind initially to DnaJ; upon interaction with the DnaJ-bound protein, DnaK hydrolyzes its bound ATP, resulting in the formation of a stable complex. GrpE releases ADP from DnaK; ATP binding to DnaK triggers the release of the substrate protein, thus completing the reaction cycle. Several rounds of ATP-dependent interactions between DnaJ, DnaK and GrpE are required for fully efficient folding. Also involved, together with DnaK and GrpE, in the DNA replication of plasmids through activation of initiation proteins. The chain is Chaperone protein DnaJ from Helicobacter pylori (strain J99 / ATCC 700824) (Campylobacter pylori J99).